The primary structure comprises 212 residues: Pyridoxine/pyridoxamine 5'-phosphate oxidase (212 aa).

The tract at residues 1–20 (MSDSAMEPQNPLTSGDFTAA) is disordered. FMN-binding positions include 59-64 (RMVLLK), 74-75 (YT), Lys-81, and Gln-103. Residue Lys-64 participates in substrate binding. Residues Tyr-121, Arg-125, and Ser-129 each coordinate substrate. FMN contacts are provided by residues 138-139 (QS) and Trp-183. 189 to 191 (RLH) is a binding site for substrate. An FMN-binding site is contributed by Arg-193.

It belongs to the pyridoxamine 5'-phosphate oxidase family. Homodimer. FMN serves as cofactor.

It carries out the reaction pyridoxamine 5'-phosphate + O2 + H2O = pyridoxal 5'-phosphate + H2O2 + NH4(+). The catalysed reaction is pyridoxine 5'-phosphate + O2 = pyridoxal 5'-phosphate + H2O2. It participates in cofactor metabolism; pyridoxal 5'-phosphate salvage; pyridoxal 5'-phosphate from pyridoxamine 5'-phosphate: step 1/1. Its pathway is cofactor metabolism; pyridoxal 5'-phosphate salvage; pyridoxal 5'-phosphate from pyridoxine 5'-phosphate: step 1/1. In terms of biological role, catalyzes the oxidation of either pyridoxine 5'-phosphate (PNP) or pyridoxamine 5'-phosphate (PMP) into pyridoxal 5'-phosphate (PLP). This Azorhizobium caulinodans (strain ATCC 43989 / DSM 5975 / JCM 20966 / LMG 6465 / NBRC 14845 / NCIMB 13405 / ORS 571) protein is Pyridoxine/pyridoxamine 5'-phosphate oxidase.